Consider the following 70-residue polypeptide: DNA-directed RNA polymerase subunit omega (70 aa).

This sequence belongs to the RNA polymerase subunit omega family. As to quaternary structure, the RNAP catalytic core consists of 2 alpha, 1 beta, 1 beta' and 1 omega subunit. When a sigma factor is associated with the core the holoenzyme is formed, which can initiate transcription.

The catalysed reaction is RNA(n) + a ribonucleoside 5'-triphosphate = RNA(n+1) + diphosphate. Its function is as follows. Promotes RNA polymerase assembly. Latches the N- and C-terminal regions of the beta' subunit thereby facilitating its interaction with the beta and alpha subunits. The protein is DNA-directed RNA polymerase subunit omega of Bacillus mycoides (strain KBAB4) (Bacillus weihenstephanensis).